The primary structure comprises 244 residues: Type III pantothenate kinase (244 aa).

7 to 14 (DIGNTRLK) contacts ATP. Residues tyrosine 95 and 102–105 (GIDR) contribute to the substrate site. The active-site Proton acceptor is the aspartate 104. Threonine 126 is a binding site for ATP. Residue threonine 177 coordinates substrate.

It belongs to the type III pantothenate kinase family. Homodimer. NH4(+) is required as a cofactor. It depends on K(+) as a cofactor.

It localises to the cytoplasm. The enzyme catalyses (R)-pantothenate + ATP = (R)-4'-phosphopantothenate + ADP + H(+). Its pathway is cofactor biosynthesis; coenzyme A biosynthesis; CoA from (R)-pantothenate: step 1/5. Functionally, catalyzes the phosphorylation of pantothenate (Pan), the first step in CoA biosynthesis. The polypeptide is Type III pantothenate kinase (Acinetobacter baumannii (strain ACICU)).